The sequence spans 147 residues: Lipoprotein YafY (147 aa).

The signal sequence occupies residues 1–20 (MKRKTLPLLALVATTLFLIA). Residue Cys21 is the site of N-palmitoyl cysteine attachment. Cys21 carries the S-diacylglycerol cysteine lipid modification.

This sequence to E.coli YfjS.

It is found in the cell inner membrane. In terms of biological role, when overproduced strongly induces degP through the activation of the two-component envelope stress response system CpxA/CpxR. The protein is Lipoprotein YafY (yafY) of Escherichia coli (strain K12).